The sequence spans 117 residues: Immunoglobulin heavy variable 1-84 (117 aa).

The first 19 residues, 1 to 19, serve as a signal peptide directing secretion; sequence MGWSWIFLFLLSGTAGVHC. The interval 20 to 49 is framework-1; it reads QIQLQQSGPELVKPGASVKISCKASGYTFT. The Ig-like domain occupies 31 to 117; it reads VKPGASVKIS…EDSAVYFCAR (87 aa). A disulfide bridge connects residues C41 and C115. A complementarity-determining-1 region spans residues 50-54; sequence DYYIN. The segment at 55-68 is framework-2; that stretch reads WVKQRPGQGLEWIG. Residues 69–85 are complementarity-determining-2; that stretch reads WIYPGSGNTKYNEKFKG. A framework-3 region spans residues 86–117; sequence KATLTVDTSSSTAYMQLSSLTSEDSAVYFCAR.

This is Immunoglobulin heavy variable 1-84 from Mus musculus (Mouse).